The primary structure comprises 530 residues: UDP-glucuronosyltransferase 1A8 (530 aa).

The signal sequence occupies residues Met1–Ala25. N-linked (GlcNAc...) asparagine glycans are attached at residues Asn71, Asn292, and Asn430. A helical transmembrane segment spans residues Val488–Tyr504.

This sequence belongs to the UDP-glycosyltransferase family. As to quaternary structure, homodimers. Homooligomer. Interacts with UGT1A1, UGT1A3, UGT1A4, UGT1A6, UGT1A7, UGT1A8, UGT1A9 and UGT1A10 to form heterodimers.

Its subcellular location is the endoplasmic reticulum membrane. The catalysed reaction is glucuronate acceptor + UDP-alpha-D-glucuronate = acceptor beta-D-glucuronoside + UDP + H(+). The enzyme catalyses 17beta-estradiol + UDP-alpha-D-glucuronate = 17beta-estradiol 3-O-(beta-D-glucuronate) + UDP + H(+). It carries out the reaction 17alpha-estradiol + UDP-alpha-D-glucuronate = 17alpha-estradiol 3-O-(beta-D-glucuronate) + UDP + H(+). It catalyses the reaction estrone + UDP-alpha-D-glucuronate = estrone 3-O-(beta-D-glucuronate) + UDP + H(+). The catalysed reaction is 16alpha,17alpha-estriol + UDP-alpha-D-glucuronate = 16alpha,17alpha-estriol 3-O-(beta-D-glucuronate) + UDP + H(+). The enzyme catalyses 2-hydroxy-17beta-estradiol + UDP-alpha-D-glucuronate = 2-hydroxy-17beta-estradiol 3-O-(beta-D-glucuronate) + UDP + H(+). It carries out the reaction 2-hydroxy-17beta-estradiol + UDP-alpha-D-glucuronate = 17beta-estradiol 2-O-(beta-D-glucuronate) + UDP + H(+). It catalyses the reaction 2-hydroxyestrone + UDP-alpha-D-glucuronate = 2-hydroxyestrone 3-O-(beta-D-glucuronate) + UDP + H(+). The catalysed reaction is 4-hydroxy-17beta-estradiol + UDP-alpha-D-glucuronate = 4-hydroxy-17beta-estradiol 3-O-(beta-D-glucuronate) + UDP + H(+). The enzyme catalyses 4-hydroxy-17beta-estradiol + UDP-alpha-D-glucuronate = 17beta-estradiol 4-O-(beta-D-glucuronate) + UDP + H(+). It carries out the reaction 4-hydroxyestrone + UDP-alpha-D-glucuronate = 4-hydroxyestrone 3-O-(beta-D-glucuronate) + UDP + H(+). It catalyses the reaction 4-hydroxyestrone + UDP-alpha-D-glucuronate = estrone 4-O-(beta-D-glucuronate) + UDP + H(+). The catalysed reaction is 2-methoxy-17beta-estradiol + UDP-alpha-D-glucuronate = 2-methoxy-17beta-estradiol 3-O-(beta-D-glucuronate) + UDP + H(+). The enzyme catalyses 2-methoxyestrone + UDP-alpha-D-glucuronate = 2-methoxyestrone 3-O-(beta-D-glucuronate) + UDP + H(+). It carries out the reaction 4-methoxy-17beta-estradiol + UDP-alpha-D-glucuronate = 4-methoxy-17beta-estradiol 3-O-(beta-D-glucuronate) + UDP + H(+). It catalyses the reaction 4-methoxyestrone + UDP-alpha-D-glucuronate = 4-methoxyestrone 3-O-(beta-D-glucuronate) + UDP + H(+). The catalysed reaction is 17beta-hydroxy-5alpha-androstan-3-one + UDP-alpha-D-glucuronate = 5alpha-dihydrotestosterone 17-O-(beta-D-glucuronate) + UDP + H(+). The enzyme catalyses 5alpha-dihydrotestosterone 17-O-(beta-D-glucuronate) + UDP-alpha-D-glucuronate = 5alpha-dihydrotestosterone 17-O-[beta-D-glucuronosyl-(1-&gt;2)-glucuronate] + UDP + H(+). It carries out the reaction prunetin + UDP-alpha-D-glucuronate = prunetin-4'-O-beta-D-glucuronide + UDP. It catalyses the reaction prunetin + UDP-alpha-D-glucuronate = prunetin-5-O-beta-D-glucuronide + UDP. The catalysed reaction is (E)-ferulate + UDP-alpha-D-glucuronate = (E)-4-O-(beta-D-glucuronosyl)-ferulate + UDP + H(+). The enzyme catalyses (E)-ferulate + UDP-alpha-D-glucuronate = (E)-ferulic acid beta-D-glucuronate ester + UDP. It carries out the reaction candesartan + UDP-alpha-D-glucuronate = candesartan O-beta-D-glucuronoside + UDP. It catalyses the reaction mycophenolate + UDP-alpha-D-glucuronate = mycophenolate 7-O-beta-D-glucuronide + UDP + H(+). Functionally, UDP-glucuronosyltransferase (UGT) that catalyzes phase II biotransformation reactions in which lipophilic substrates are conjugated with glucuronic acid to increase the metabolite's water solubility, thereby facilitating excretion into either the urine or bile. Essential for the elimination and detoxification of drugs, xenobiotics and endogenous compounds. Catalyzes the glucuronidation of endogenous steroid hormones such as androgens and estrogens. Produces dihydrotestosterone (DHT) diglucuronide from the DHT after two subsequent glucoronidation steps. Involved in the glucuronidation of the phytochemical ferulic acid at the phenolic or the carboxylic acid group. Also catalyzes the glucuronidation of the isoflavones genistein, daidzein, glycitein, formononetin, biochanin A and prunetin, which are phytoestrogens with anticancer and cardiovascular properties. Involved in the glucuronidation of the AGTR1 angiotensin receptor antagonist caderastan, a drug which can inhibit the effect of angiotensin II. Also metabolizes mycophenolate, an immunosuppressive agent. The sequence is that of UDP-glucuronosyltransferase 1A8 from Rattus norvegicus (Rat).